Consider the following 312-residue polypeptide: MMKNPLAVSIPGLTLKNPIIPASGCFGFGEEYANYYDLDQLGSIMIKATTPQARYGNPTPRVAETPSGMLNAIGLQNPGLEVVMQEKLPKLEKYPNLPIIANVAGACEEDYVAVCAKIGQAPNVKAIELNISCPNVKHGGIAFGTDPEVAFQLTQAVKKVASVPIYVKLSPNVTDIVPIAQAIEAGGADGFSMINTLLGMRIDLKTRKPILANQTGGLSGPAIKPVAIRLIRQVASVSQLPIIGMGGVQTVDDVLEMFMAGASAVGVGTANFTDPYICPKLIDGLPKRMEELGIESLEQLIKEVREGQQNAR.

FMN is bound by residues serine 23 and 47–48; that span reads KA. Residues lysine 47 and 71 to 75 contribute to the substrate site; that span reads NAIGL. FMN contacts are provided by asparagine 102 and asparagine 130. Asparagine 130 contributes to the substrate binding site. Residue cysteine 133 is the Nucleophile of the active site. Positions 168 and 194 each coordinate FMN. Residue 195 to 196 participates in substrate binding; that stretch reads NT. Residues glycine 220, 246–247, and 268–269 contribute to the FMN site; these read GG and GT.

The protein belongs to the dihydroorotate dehydrogenase family. Type 1 subfamily. As to quaternary structure, heterotetramer of 2 PyrK and 2 PyrD type B subunits. It depends on FMN as a cofactor.

The protein resides in the cytoplasm. It carries out the reaction (S)-dihydroorotate + NAD(+) = orotate + NADH + H(+). Its pathway is pyrimidine metabolism; UMP biosynthesis via de novo pathway; orotate from (S)-dihydroorotate (NAD(+) route): step 1/1. Functionally, catalyzes the conversion of dihydroorotate to orotate with NAD(+) as electron acceptor. This Enterococcus faecalis (strain ATCC 700802 / V583) protein is Dihydroorotate dehydrogenase B (NAD(+)), catalytic subunit (pyrDB).